The primary structure comprises 290 residues: 4-hydroxybenzoate octaprenyltransferase (290 aa).

6 helical membrane passes run 41 to 61 (WPLLAIFALGTLLMRSAGCAM), 89 to 109 (WEAVAIAVVLAFISFLLIQPL), 133 to 153 (FFAIPQAYLGIAFGFGIPMAF), 158 to 178 (DTVPMLAWVMLIANIFWSVAY), 202 to 224 (FGRFDVAAVMLCYAATLGIYVWI), and 269 to 289 (WLGGVLFAGIAAHYLLAGTAG).

The protein belongs to the UbiA prenyltransferase family. Mg(2+) serves as cofactor.

The protein resides in the cell inner membrane. The catalysed reaction is all-trans-octaprenyl diphosphate + 4-hydroxybenzoate = 4-hydroxy-3-(all-trans-octaprenyl)benzoate + diphosphate. It functions in the pathway cofactor biosynthesis; ubiquinone biosynthesis. In terms of biological role, catalyzes the prenylation of para-hydroxybenzoate (PHB) with an all-trans polyprenyl group. Mediates the second step in the final reaction sequence of ubiquinone-8 (UQ-8) biosynthesis, which is the condensation of the polyisoprenoid side chain with PHB, generating the first membrane-bound Q intermediate 3-octaprenyl-4-hydroxybenzoate. The chain is 4-hydroxybenzoate octaprenyltransferase from Burkholderia ambifaria (strain MC40-6).